The primary structure comprises 20 residues: Putative 18 kDa spermidine-binding protein (20 aa).

In terms of assembly, dimer of 18 kDa and 60 kDa subunit.

The protein resides in the microsome membrane. The protein localises to the endoplasmic reticulum membrane. In terms of biological role, may have spermidine-binding activity. The sequence is that of Putative 18 kDa spermidine-binding protein from Zea mays (Maize).